The following is a 222-amino-acid chain: Cytochrome b6 (222 aa).

A helical transmembrane segment spans residues 39 to 59 (IFYCLGGITLVCFIIQFATGF). Residue Cys42 participates in heme c binding. Heme b is bound by residues His93 and His107. Helical transmembrane passes span 97-117 (ASMM…TGGF), 123-143 (LTWM…VTGY), and 193-213 (LHTF…FLMI). Heme b contacts are provided by His194 and His209.

This sequence belongs to the cytochrome b family. PetB subfamily. In terms of assembly, the 4 large subunits of the cytochrome b6-f complex are cytochrome b6, subunit IV (17 kDa polypeptide, PetD), cytochrome f and the Rieske protein, while the 4 small subunits are PetG, PetL, PetM and PetN. The complex functions as a dimer. It depends on heme b as a cofactor. Requires heme c as cofactor.

It localises to the cellular thylakoid membrane. Its function is as follows. Component of the cytochrome b6-f complex, which mediates electron transfer between photosystem II (PSII) and photosystem I (PSI), cyclic electron flow around PSI, and state transitions. The polypeptide is Cytochrome b6 (Rippkaea orientalis (strain PCC 8801 / RF-1) (Cyanothece sp. (strain PCC 8801))).